Consider the following 363-residue polypeptide: DNA replication and repair protein RecF (363 aa).

30 to 37 contributes to the ATP binding site; sequence GSNGSGKT.

Belongs to the RecF family.

Its subcellular location is the cytoplasm. In terms of biological role, the RecF protein is involved in DNA metabolism; it is required for DNA replication and normal SOS inducibility. RecF binds preferentially to single-stranded, linear DNA. It also seems to bind ATP. In Photorhabdus laumondii subsp. laumondii (strain DSM 15139 / CIP 105565 / TT01) (Photorhabdus luminescens subsp. laumondii), this protein is DNA replication and repair protein RecF.